Here is a 185-residue protein sequence, read N- to C-terminus: V-type ATP synthase subunit E (185 aa).

Belongs to the V-ATPase E subunit family.

Functionally, produces ATP from ADP in the presence of a proton gradient across the membrane. This Deinococcus geothermalis (strain DSM 11300 / CIP 105573 / AG-3a) protein is V-type ATP synthase subunit E.